Consider the following 80-residue polypeptide: Conotoxin VnMSGL-0121 (80 aa).

An N-terminal signal peptide occupies residues 1–20; sequence MSGLGIMVLTLLLLVSMATS. The propeptide occupies 21–44; that stretch reads HQDGGGKQATQRDAINVRRRRSIT. 3 cysteine pairs are disulfide-bonded: Cys52–Cys65, Cys56–Cys74, and Cys64–Cys78. Phe79 bears the Phenylalanine amide mark.

It belongs to the conotoxin O3 superfamily. As to expression, expressed by the venom duct.

It is found in the secreted. This chain is Conotoxin VnMSGL-0121, found in Conus ventricosus (Mediterranean cone).